Reading from the N-terminus, the 1244-residue chain is Ras-specific guanine nucleotide-releasing factor 2 (1244 aa).

Positions 22-129 constitute a PH 1 domain; sequence EGTKRGYLSK…WVEAIQQASY (108 aa). The stretch at 147 to 189 forms a coiled coil; sequence VQIVETEKVAANQLRTQLEDQDTEIERLKAEIIALNKTKERMR. The IQ domain maps to 201–230; sequence DIKKIKKVQSFMRGWLCRRKWKIIVQDYIC. The 187-residue stretch at 239–425 folds into the DH domain; it reads KRNQIVFNMV…EELSRVMHDE (187 aa). The PH 2 domain maps to 466–584; that stretch reads PSVERGKLSK…WTSDISQCID (119 aa). Residues 631-745 enclose the N-terminal Ras-GEF domain; the sequence is KVPQIRYASV…PVRTRKLSLN (115 aa). 3 disordered regions span residues 704–743, 759–814, and 843–879; these read NRSGDHVNDKSPRLCRKFSSPPPLSISSRTSSPVRTRKLS, TTSS…NAEV, and PESPQASEPGEISPCRSPSTPRHLRYRQSGVQTAENS. Positions 706–715 are enriched in basic and acidic residues; that stretch reads SGDHVNDKSP. Over residues 728 to 743 the composition is skewed to polar residues; that stretch reads SISSRTSSPVRTRKLS. Low complexity-rich tracts occupy residues 759–774 and 781–806; these read TTSSSAASSPTSANPT and NNNNNSKPPLDLSRGQSPSSPEQSPG. The Ras-GEF domain occupies 1009–1241; the sequence is SAMEIAEQIT…YDLSLKIEPR (233 aa).

The protein localises to the cytoplasm. The protein resides in the cell membrane. It localises to the endoplasmic reticulum membrane. In terms of biological role, functions as a calcium-regulated nucleotide exchange factor activating both Ras and rac1 through the exchange of bound GDP for GTP. May function in synaptic plasticity. The polypeptide is Ras-specific guanine nucleotide-releasing factor 2 (rasgrf2) (Danio rerio (Zebrafish)).